A 277-amino-acid polypeptide reads, in one-letter code: MKKQRAFLKWAGGKYSLVEDIQRHLPEARELVEPFVGAGSVFLNTDFERYLLADINPDLINFYNLLKTEPQAYIHEAKRWFVPENNRKEVYLDIRKQFNQSDDAMFRSLAFLYMNRFGFNGLCRYNKKGGFNVPFGSYKKPYFPEQELEFFAEKAQRATFICASYGETFARAQSDSVIYCDPPYAPLSTTANFTSYAGNGFTLDDQAALADIAEKTAKERGISVLISNHDTTHTRRLYRGAQLNVVKANRTISRNGAGRNKVDELLALFTPHLSSQA.

Tryptophan 10, lysine 14, aspartate 54, and aspartate 181 together coordinate S-adenosyl-L-methionine.

Belongs to the N(4)/N(6)-methyltransferase family.

It carries out the reaction a 2'-deoxyadenosine in DNA + S-adenosyl-L-methionine = an N(6)-methyl-2'-deoxyadenosine in DNA + S-adenosyl-L-homocysteine + H(+). Functionally, an alpha subtype methylase, recognizes the double-stranded sequence 5'-GATC-3' and methylates A-2. May be involved in methyl-directed DNA mismatch repair, initiation of chromosome replication and gene expression. The chain is DNA adenine methylase from Vibrio cholerae serotype O1 (strain ATCC 39541 / Classical Ogawa 395 / O395).